A 485-amino-acid chain; its full sequence is Zinc finger SWIM domain-containing protein 1 (485 aa).

The SWIM-type zinc-finger motif lies at 363–405 (MNIQILEDTHKVQPQPPASCSCYFNQAFHLPCRHILAMLSARR).

The chain is Zinc finger SWIM domain-containing protein 1 (ZSWIM1) from Homo sapiens (Human).